The sequence spans 1046 residues: Translation initiation factor IF-2 (1046 aa).

The interval 49–450 is disordered; it reads ALQQGNGGKA…GVMLPRGNGQ (402 aa). Composition is skewed to low complexity over residues 57-80 and 89-106; these read KAAPRKAAPAKPGAPSPAQAARPA and PAAAERPAAAERPAAAPA. Over residues 107 to 128 the composition is skewed to pro residues; it reads APGPRPGPKPAPRPAPAAPAPA. The span at 129 to 169 shows a compositional bias: low complexity; it reads APEFTAPPSAPAAPAAAASGPRPGARPGAPKPGGARPATPG. Over residues 177-194 the composition is skewed to basic and acidic residues; sequence RGERTDRGDRGDRGDRQG. Residues 195 to 214 show a composition bias toward low complexity; it reads AARPGGQAPRPGARPAGPRP. Composition is skewed to gly residues over residues 239-248 and 266-280; these read PRPGGAGAPG and GGPGGAPRPQGGPGG. Over residues 302–318 the composition is skewed to low complexity; it reads GNRPNPGMMPQRPAAGP. The span at 319–414 shows a compositional bias: gly residues; it reads RPGGGGPGGR…GTQGAFGRPG (96 aa). The segment covering 418–427 has biased composition (basic residues); the sequence is RRGRKSKRQR. The region spanning 539–711 is the tr-type G domain; the sequence is ARPPVVTVMG…VVLTADASLD (173 aa). The G1 stretch occupies residues 548–555; sequence GHVDHGKT. 548–555 is a binding site for GTP; the sequence is GHVDHGKT. The interval 573-577 is G2; that stretch reads GITQH. The interval 598 to 601 is G3; it reads DTPG. Residues 598–602 and 652–655 contribute to the GTP site; these read DTPGH and NKID. A G4 region spans residues 652–655; sequence NKID. The G5 stretch occupies residues 688 to 690; it reads SAK.

This sequence belongs to the TRAFAC class translation factor GTPase superfamily. Classic translation factor GTPase family. IF-2 subfamily.

The protein resides in the cytoplasm. Functionally, one of the essential components for the initiation of protein synthesis. Protects formylmethionyl-tRNA from spontaneous hydrolysis and promotes its binding to the 30S ribosomal subunits. Also involved in the hydrolysis of GTP during the formation of the 70S ribosomal complex. This is Translation initiation factor IF-2 from Streptomyces avermitilis (strain ATCC 31267 / DSM 46492 / JCM 5070 / NBRC 14893 / NCIMB 12804 / NRRL 8165 / MA-4680).